A 75-amino-acid chain; its full sequence is Translation initiation factor IF-1 (75 aa).

The S1-like domain maps to methionine 1 to lysine 72.

Belongs to the IF-1 family. Component of the 30S ribosomal translation pre-initiation complex which assembles on the 30S ribosome in the order IF-2 and IF-3, IF-1 and N-formylmethionyl-tRNA(fMet); mRNA recruitment can occur at any time during PIC assembly.

It localises to the cytoplasm. One of the essential components for the initiation of protein synthesis. Stabilizes the binding of IF-2 and IF-3 on the 30S subunit to which N-formylmethionyl-tRNA(fMet) subsequently binds. Helps modulate mRNA selection, yielding the 30S pre-initiation complex (PIC). Upon addition of the 50S ribosomal subunit IF-1, IF-2 and IF-3 are released leaving the mature 70S translation initiation complex. The polypeptide is Translation initiation factor IF-1 (Synechocystis sp. (strain ATCC 27184 / PCC 6803 / Kazusa)).